A 79-amino-acid chain; its full sequence is MSSQQQQRQQQQCPPQRAQQQQVKQPCQPPPVKCQETCAPKTKDPCAPQVKKQCPPKGTIIPAQQKCPSAQQASKSKQK.

Residues 1-26 are compositionally biased toward low complexity; that stretch reads MSSQQQQRQQQQCPPQRAQQQQVKQP. The disordered stretch occupies residues 1–79; sequence MSSQQQQRQQ…AQQASKSKQK (79 aa). Over residues 66–79 the composition is skewed to polar residues; it reads KCPSAQQASKSKQK.

This sequence belongs to the cornifin (SPRR) family. In terms of processing, cross-linked to membrane proteins by transglutaminase.

It is found in the cytoplasm. The protein resides in the cell cortex. Functionally, cross-linked envelope protein of keratinocytes. Involved in UV-induced cornification. This Homo sapiens (Human) protein is Small proline-rich protein 4 (SPRR4).